The following is a 689-amino-acid chain: Small ribosomal subunit protein mS39 (689 aa).

The N-terminal 37 residues, 1–37 (MAVVSAVRWLGLRSRLGQPLTGRRAGLCEQARSCRFY), are a transit peptide targeting the mitochondrion. Residue K126 is modified to N6-acetyllysine. PPR repeat units lie at residues 149–183 (IKDI…GTTV), 184–219 (SLET…EALE), 255–289 (NEHS…RLHA), 290–330 (DVYT…KVKP), 331–367 (NLQT…GIEP), 368–409 (SLAT…SPKD), 412–446 (DDKF…DNWK), 454–488 (RNFY…AYFP), 489–523 (HSQT…GHTF), and 572–606 (PATS…NKIP). A disordered region spans residues 665–689 (NLTALTSDSDTDSSSDSDSDTSEGK). A compositionally biased stretch (acidic residues) spans 673–689 (SDTDSSSDSDSDTSEGK).

It belongs to the mitochondrion-specific ribosomal protein mS39 family. Component of the mitochondrial small ribosomal subunit (mt-SSU). Mature mammalian 55S mitochondrial ribosomes consist of a small (28S) and a large (39S) subunit. The 28S small subunit contains a 12S ribosomal RNA (12S mt-rRNA) and 30 different proteins. The 39S large subunit contains a 16S rRNA (16S mt-rRNA), a copy of mitochondrial valine transfer RNA (mt-tRNA(Val)), which plays an integral structural role, and 52 different proteins. Associated with the 12S mitochondrial rRNA (12S mt-rRNA). Abundant in testes, skeletal muscle and heart tissue.

Its subcellular location is the mitochondrion. In terms of biological role, mitochondrial RNA-binding protein that has a role in mitochondrial translation. In Homo sapiens (Human), this protein is Small ribosomal subunit protein mS39 (PTCD3).